Reading from the N-terminus, the 525-residue chain is GMP synthase [glutamine-hydrolyzing] (525 aa).

In terms of domain architecture, Glutamine amidotransferase type-1 spans arginine 9–leucine 207. Cysteine 86 serves as the catalytic Nucleophile. Active-site residues include histidine 181 and glutamate 183. One can recognise a GMPS ATP-PPase domain in the interval tryptophan 208 to arginine 400. Serine 235–serine 241 lines the ATP pocket.

As to quaternary structure, homodimer.

It catalyses the reaction XMP + L-glutamine + ATP + H2O = GMP + L-glutamate + AMP + diphosphate + 2 H(+). It participates in purine metabolism; GMP biosynthesis; GMP from XMP (L-Gln route): step 1/1. Its function is as follows. Catalyzes the synthesis of GMP from XMP. This Shigella flexneri serotype 5b (strain 8401) protein is GMP synthase [glutamine-hydrolyzing].